The sequence spans 457 residues: tRNA modification GTPase MnmE (457 aa).

Residues arginine 25, glutamate 87, and arginine 126 each coordinate (6S)-5-formyl-5,6,7,8-tetrahydrofolate. Residues glycine 223–phenylalanine 377 form the TrmE-type G domain. Residue asparagine 233 participates in K(+) binding. Residues asparagine 233 to serine 238, threonine 252 to threonine 258, and aspartate 277 to glycine 280 contribute to the GTP site. Mg(2+) is bound at residue serine 237. 3 residues coordinate K(+): threonine 252, isoleucine 254, and threonine 257. Position 258 (threonine 258) interacts with Mg(2+). Lysine 457 contributes to the (6S)-5-formyl-5,6,7,8-tetrahydrofolate binding site.

It belongs to the TRAFAC class TrmE-Era-EngA-EngB-Septin-like GTPase superfamily. TrmE GTPase family. As to quaternary structure, homodimer. Heterotetramer of two MnmE and two MnmG subunits. Requires K(+) as cofactor.

Its subcellular location is the cytoplasm. Its function is as follows. Exhibits a very high intrinsic GTPase hydrolysis rate. Involved in the addition of a carboxymethylaminomethyl (cmnm) group at the wobble position (U34) of certain tRNAs, forming tRNA-cmnm(5)s(2)U34. This chain is tRNA modification GTPase MnmE, found in Streptococcus gordonii (strain Challis / ATCC 35105 / BCRC 15272 / CH1 / DL1 / V288).